Here is a 429-residue protein sequence, read N- to C-terminus: S-adenosylmethionine synthase (429 aa).

His14 contacts ATP. Asp16 lines the Mg(2+) pocket. Glu42 serves as a coordination point for K(+). Residues Glu55 and Gln98 each contribute to the L-methionine site. The flexible loop stretch occupies residues 98–108 (QSADINRGVDR). ATP contacts are provided by residues 165 to 167 (DAK), 252 to 253 (KF), Asp261, 267 to 268 (RK), Ala284, and Lys288. L-methionine is bound at residue Asp261. Lys292 is an L-methionine binding site.

It belongs to the AdoMet synthase family. In terms of assembly, homotetramer; dimer of dimers. Mg(2+) is required as a cofactor. The cofactor is K(+).

It is found in the cytoplasm. The catalysed reaction is L-methionine + ATP + H2O = S-adenosyl-L-methionine + phosphate + diphosphate. It participates in amino-acid biosynthesis; S-adenosyl-L-methionine biosynthesis; S-adenosyl-L-methionine from L-methionine: step 1/1. Catalyzes the formation of S-adenosylmethionine (AdoMet) from methionine and ATP. The overall synthetic reaction is composed of two sequential steps, AdoMet formation and the subsequent tripolyphosphate hydrolysis which occurs prior to release of AdoMet from the enzyme. This is S-adenosylmethionine synthase from Porphyromonas gingivalis (strain ATCC BAA-308 / W83).